A 398-amino-acid polypeptide reads, in one-letter code: Succinate--CoA ligase [ADP-forming] subunit beta (398 aa).

An ATP-grasp domain is found at 9-254 (KRLLHEYGAP…ISEEDPKEIE (246 aa)). ATP-binding positions include K46, 53–55 (GRG), E109, A112, and E117. Mg(2+) contacts are provided by N209 and D223. Substrate contacts are provided by residues N274 and 331-333 (GIM).

This sequence belongs to the succinate/malate CoA ligase beta subunit family. In terms of assembly, heterotetramer of two alpha and two beta subunits. Mg(2+) serves as cofactor.

The enzyme catalyses succinate + ATP + CoA = succinyl-CoA + ADP + phosphate. It carries out the reaction GTP + succinate + CoA = succinyl-CoA + GDP + phosphate. It functions in the pathway carbohydrate metabolism; tricarboxylic acid cycle; succinate from succinyl-CoA (ligase route): step 1/1. In terms of biological role, succinyl-CoA synthetase functions in the citric acid cycle (TCA), coupling the hydrolysis of succinyl-CoA to the synthesis of either ATP or GTP and thus represents the only step of substrate-level phosphorylation in the TCA. The beta subunit provides nucleotide specificity of the enzyme and binds the substrate succinate, while the binding sites for coenzyme A and phosphate are found in the alpha subunit. The sequence is that of Succinate--CoA ligase [ADP-forming] subunit beta from Bartonella bacilliformis (strain ATCC 35685 / KC583 / Herrer 020/F12,63).